The primary structure comprises 522 residues: Maturase K (522 aa).

Belongs to the intron maturase 2 family. MatK subfamily.

Its subcellular location is the plastid. The protein resides in the chloroplast. Usually encoded in the trnK tRNA gene intron. Probably assists in splicing its own and other chloroplast group II introns. The polypeptide is Maturase K (Tigridia pavonia (Mexican shell flower)).